We begin with the raw amino-acid sequence, 282 residues long: Predicted GPI-anchored protein 23 (282 aa).

The N-terminal stretch at 1-18 (MRVSTLVLSTSIIPIATA) is a signal peptide. The tract at residues 163–264 (GQETSGAGSL…SSNSSSSAGM (102 aa)) is disordered. 3 N-linked (GlcNAc...) asparagine glycosylation sites follow: Asn180, Asn192, and Asn257. Over residues 186–216 (GGSGSSNGTSSGSGSGSGAGVGSGSGSGSGS) the composition is skewed to gly residues. Low complexity predominate over residues 236–264 (LGISSSISQSTTRQLQTSGSSNSSSSAGM). Ser259 is lipidated: GPI-anchor amidated serine. A propeptide spans 260–282 (SSAGMGNVVVGMNAVALAALVLI) (removed in mature form).

The protein resides in the cell membrane. Probable cell surface protein involved in the process of adhesion and early events of invasion. In Candida albicans (strain SC5314 / ATCC MYA-2876) (Yeast), this protein is Predicted GPI-anchored protein 23 (PGA23).